The following is a 644-amino-acid chain: Threonine--tRNA ligase (644 aa).

Residues 1–61 enclose the TGS domain; it reads MPDIQLPDGS…DQDAEVAIVT (61 aa). The catalytic stretch occupies residues 242 to 535; it reads DHRRIGTELE…LIEHYEGKFP (294 aa). 3 residues coordinate Zn(2+): cysteine 335, histidine 386, and histidine 512.

It belongs to the class-II aminoacyl-tRNA synthetase family. Homodimer. Zn(2+) serves as cofactor.

The protein resides in the cytoplasm. It carries out the reaction tRNA(Thr) + L-threonine + ATP = L-threonyl-tRNA(Thr) + AMP + diphosphate + H(+). In terms of biological role, catalyzes the attachment of threonine to tRNA(Thr) in a two-step reaction: L-threonine is first activated by ATP to form Thr-AMP and then transferred to the acceptor end of tRNA(Thr). Also edits incorrectly charged L-seryl-tRNA(Thr). The polypeptide is Threonine--tRNA ligase (Acidithiobacillus ferrooxidans (strain ATCC 23270 / DSM 14882 / CIP 104768 / NCIMB 8455) (Ferrobacillus ferrooxidans (strain ATCC 23270))).